A 2034-amino-acid polypeptide reads, in one-letter code: Sperm vesicle fusion protein fer-1 (2034 aa).

A disordered region spans residues 1–80; that stretch reads MTVKEKLLKV…GGSDIELLPD (80 aa). The Cytoplasmic segment spans residues 1–1998; that stretch reads MTVKEKLLKV…CIKYFWHYYG (1998 aa). Residues 66–79 show a composition bias toward acidic residues; it reads ELSDDGGSDIELLP. 4 C2 domains span residues 229–367, 954–1082, 1120–1246, and 1363–1484; these read RIDE…YLPT, DSED…PQWF, YKER…KSDH, and KKGK…ATGG. A disordered region spans residues 1563–1619; it reads QKAGKENFSDGSDQQNEDVSDGSWDEEDLEREKEKLKWEKHRSKGKPLKKVTTEKAE. Over residues 1577–1591 the composition is skewed to acidic residues; that stretch reads QNEDVSDGSWDEEDL. Positions 1600–1611 are enriched in basic residues; the sequence is WEKHRSKGKPLK. The C2 5 domain occupies 1684–1831; it reads EYGAIPAPFN…EGIGSPSDVG (148 aa). Positions 1953–1972 are disordered; the sequence is QEPAGKKRSEPNHSPFLEKP. A helical membrane pass occupies residues 1999–2019; it reads LQILLWLIIIVILILTIFVLL. The Extracellular portion of the chain corresponds to 2020 to 2034; it reads HTWPTILAEIIKAIF.

It belongs to the ferlin family. As to expression, exclusively expressed in the testis.

The protein resides in the membrane. Functionally, required for the fusion of the membranous organelles (MOs) with the plasma membrane, a process essential in spermiogenesis. The protein is Sperm vesicle fusion protein fer-1 (fer-1) of Caenorhabditis elegans.